A 595-amino-acid polypeptide reads, in one-letter code: Protein halfway (595 aa).

Disordered stretches follow at residues 1–42 (MLLT…ADDE) and 64–98 (TGAA…PLLP). 2 N-linked (GlcNAc...) asparagine glycosylation sites follow: asparagine 250 and asparagine 255. Residues 347–402 (ESTKRCMTKCPVIPNYGSCKCRFESIMIIQDDQSKPKCHVDCSNLGLVELPPRLPD) form the LRRNT domain. 3 LRR repeats span residues 403–424 (NTFV…FQTN), 429–450 (NINR…EGTK), and 454–475 (NFQR…FLNN). The LRRCT domain occupies 489-538 (NKLQCDCNSAKTLQNWLKERSTDIPDYMEIRCRNIPQSVIELQEAKLCQS).

In terms of biological role, has a role in the ecdysone induced cascade; probably indirect control of 'late' ecdysone genes. The polypeptide is Protein halfway (hfw) (Drosophila pseudoobscura pseudoobscura (Fruit fly)).